A 501-amino-acid polypeptide reads, in one-letter code: MSEELGLNDLLAVRREKLQNLEAEGANPFGGKFERTDTAQSMKEKYDAKSKEELEEETHEVVLAGRVMTKRGKGKAGFAHIQDLTGQIQIYVRKDAVGDKSYDLFTSIDIGDIVGVKGVAFKTKVGELSVKVQDFQLLTKSLRPLPDKYHGLKDVEQRYRQRYLDLIVNPEVRDTFVLRSKILQSMRRYLDDRGYLEVETPTMHSIPGGASARPFVTHHNALDMTLYMRIAIELHLKRLIVGGMEKVYEIGRVFRNEGVSTRHNPEFTMIELYEAYADYNDIMELTELLIAHIAKDVLGTTTITYGEHEVNLEPKWRRVHMVEAIKEETGVDFWNEMSDEEARALAKEHNVPVKETMTYGHVVNEFFEHFVEEKLIQPTFVYGHPVAISPLAKKNPDDPRFTDRFELFIVGREHANAFSELNDPIDQRHRFEQQLVEREQGDDEAHMMDEDFVESLEYGMPPTGGLGIGIDRLVMLLTNSPSIRDVLLFPQMRHKDSPATE.

Positions 406 and 413 each coordinate Mg(2+).

It belongs to the class-II aminoacyl-tRNA synthetase family. In terms of assembly, homodimer. Requires Mg(2+) as cofactor.

It localises to the cytoplasm. The catalysed reaction is tRNA(Lys) + L-lysine + ATP = L-lysyl-tRNA(Lys) + AMP + diphosphate. This is Lysine--tRNA ligase (lysS) from Halalkalibacterium halodurans (strain ATCC BAA-125 / DSM 18197 / FERM 7344 / JCM 9153 / C-125) (Bacillus halodurans).